Consider the following 639-residue polypeptide: CTTNBP2 N-terminal-like protein (639 aa).

Residues 87–285 adopt a coiled-coil conformation; it reads MKQCKNMQER…DLEASHQHSS (199 aa). A phosphoserine mark is found at S284 and S285. Disordered stretches follow at residues 387–430, 463–490, and 511–609; these read VENG…PCSS, RHKF…LSPT, and RFTS…AASL. Composition is skewed to low complexity over residues 405 to 430 and 467 to 477; these read PLSS…PCSS and QSQADQDQQAS. 7 positions are modified to phosphoserine: S481, S488, S523, S527, S560, S563, and S568. Residues 511–529 show a composition bias toward polar residues; sequence RFTSQQGPIKPVSPNSSPF. Phosphothreonine is present on residues T570 and T590. Residues 587–600 show a composition bias toward low complexity; it reads PGLTPSPSATTPLT. S592 is subject to Phosphoserine.

Interacts with CTTN/cortactin; this interaction may redistribute CTTN to stress fibers. May form homomers. Associates with the core of STRIPAK complexes composed of PP2A catalytic and scaffolding subunits, the striatins (PP2A regulatory subunits), the striatin-associated proteins MOB4, STRIP1 and STRIP2, PDCD10 and members of the STE20 kinases, such as STK24 and STK26.

Its subcellular location is the cell projection. The protein resides in the lamellipodium. It is found in the cytoplasm. The protein localises to the cytoskeleton. It localises to the stress fiber. Regulates lamellipodial actin dynamics in a CTTN-dependent manner. Associates with core striatin-interacting phosphatase and kinase (STRIPAK) complex to form CTTNBP2NL-STRIPAK complexes. STRIPAK complexes have critical roles in protein (de)phosphorylation and are regulators of multiple signaling pathways including Hippo, MAPK, nuclear receptor and cytoskeleton remodeling. Different types of STRIPAK complexes are involved in a variety of biological processes such as cell growth, differentiation, apoptosis, metabolism and immune regulation. In Homo sapiens (Human), this protein is CTTNBP2 N-terminal-like protein.